The following is a 411-amino-acid chain: Putative binding protein BRA0748/BS1330_II0741 (411 aa).

The N-terminal stretch at 1–25 (MLIRKWKAGLLAGLSILALASSADA) is a signal peptide.

The protein belongs to the bacterial solute-binding protein 1 family. In terms of assembly, the complex is composed of two ATP-binding proteins (BRA0745), two transmembrane proteins (BRA0749) and a solute-binding protein (BRA0748).

It localises to the periplasm. In terms of biological role, probably part of an ABC transporter complex. This Brucella suis biovar 1 (strain 1330) protein is Putative binding protein BRA0748/BS1330_II0741.